The following is a 294-amino-acid chain: Thymidylate synthase (294 aa).

DUMP contacts are provided by residues Arg30 and 156 to 157 (RR). Cys176 functions as the Nucleophile in the catalytic mechanism. DUMP contacts are provided by residues 196 to 199 (RSGD), Asn207, and 237 to 239 (HVY). Asp199 contacts (6R)-5,10-methylene-5,6,7,8-tetrahydrofolate. Ala293 is a (6R)-5,10-methylene-5,6,7,8-tetrahydrofolate binding site.

It belongs to the thymidylate synthase family. Homodimer.

It catalyses the reaction dUMP + (6R)-5,10-methylene-5,6,7,8-tetrahydrofolate = 7,8-dihydrofolate + dTMP. It functions in the pathway pyrimidine metabolism; dTTP biosynthesis. The sequence is that of Thymidylate synthase from Ascaris suum (Pig roundworm).